Consider the following 452-residue polypeptide: MPVDLDNSSTVSGEASVSISSTGNQNPLPNSTGKKKRNLPGMPDPESEVIALSPKTLLATNRFVCEICNKGFQRDQNLQLHRRGHNLPWKLRQKSNKEVKKKVYVCPEVSCVHHDPSRALGDLTGIKKHFCRKHGEKKWKCDKCSKKYAVQSDWKAHSKICGTKEYKCDCGTLFSRRDSFITHRAFCDALAEENARSHHSQSKKQNPEILTRKNPVPNPVPAPVDTESAKIKSSSTLTIKQSESPKTPPEIVQEAPKPTSLNVVTSNGVFAGLFESSSASPSIYTTSSSSKSLFASSSSIEPISLGLSTSHGSSFLGSNRFHAQPAMSATALLQKAAQMGAASSGGSLLHGLGIVSSTSTSIDAIVPHGLGLGLPCGGESSSGLKELMMGNSSVFGPKQTTLDFLGLGRAVGNGNGPSNGLSTLVGGGTGIDMATTFGSGEFSGKDISRRKS.

Residues 1–32 (MPVDLDNSSTVSGEASVSISSTGNQNPLPNST) show a composition bias toward polar residues. The interval 1–47 (MPVDLDNSSTVSGEASVSISSTGNQNPLPNSTGKKKRNLPGMPDPES) is disordered. Ser53 carries the post-translational modification Phosphoserine. 2 C2H2-type zinc fingers span residues 63–85 (FVCEICNKGFQRDQNLQLHRRGH) and 104–134 (YVCPEVSCVHHDPSRALGDLTGIKKHFCRKH). The Nuclear localization signal signature appears at 126-133 (IKKHFCRK). The segment at 139–162 (WKCDKCSKKYAVQSDWKAHSKICG) adopts a C2H2-type 2; degenerate zinc-finger fold. Residues Cys141, Cys144, His157, Cys161, Cys168, Cys170, His183, and Cys187 each contribute to the Zn(2+) site. The segment at 166–189 (YKCDCGTLFSRRDSFITHRAFCDA) adopts a CCHC-type 2; atypical zinc-finger fold. An SHR-binding region spans residues 176–188 (RRDSFITHRAFCD). The interval 196 to 254 (RSHHSQSKKQNPEILTRKNPVPNPVPAPVDTESAKIKSSSTLTIKQSESPKTPPEIVQE) is disordered. The segment covering 231–245 (IKSSSTLTIKQSESP) has biased composition (polar residues).

As to quaternary structure, interacts with the DELLA proteins (e.g. GAI/RGA2, RGA, RGL1, RGL2 and RGLG3), acting as coactivators and with TPR1 and TPR4, acting as a corepressors, at the promoter of GA20OX2 gene. As to expression, observed in vegetative tissues. Mainly expressed in hypocotyls, petioles, shoot apices, root tips, and trichomes, and, at low levels, in leaves, stems and flowers.

It localises to the nucleus. Its activity is regulated as follows. Transcription activation is repressed by gibberellic acid GA(3) in the presence of TPR4. In terms of biological role, transcription factor that acts as a positive regulator of gibberellin (GA) action, homeostasis and signaling. GA converts the GAF1 complex from transcriptional activator to repressor via the degradation of DELLA proteins. This is Zinc finger protein GAI-ASSOCIATED FACTOR 1 from Arabidopsis thaliana (Mouse-ear cress).